The primary structure comprises 235 residues: MTLNVNVLTIFPEMFPGPLSYSVIGRALNKGIWNLNVIDIRSFAKDKHKTVDDKPYGGGPGMIMKADVIGSAIDEVLSKNKNTKLIYMSPSGVKLNQDISGQLTHFSNITVLCGRFEGIDKRILDFYDFHEISIGDYILSGGEVACMVLIEACVRLIPGVVNNTQSICDESFTLNNQLEYPQYTRPAKWRGLEVPDILLSGNHKKINLWKANQSYCITKQRRPELTDTINGDIYE.

S-adenosyl-L-methionine contacts are provided by residues glycine 114 and 134–139 (IGDYIL).

It belongs to the RNA methyltransferase TrmD family. Homodimer.

The protein resides in the cytoplasm. It catalyses the reaction guanosine(37) in tRNA + S-adenosyl-L-methionine = N(1)-methylguanosine(37) in tRNA + S-adenosyl-L-homocysteine + H(+). Specifically methylates guanosine-37 in various tRNAs. The sequence is that of tRNA (guanine-N(1)-)-methyltransferase from Ehrlichia canis (strain Jake).